A 344-amino-acid chain; its full sequence is Hyoscyamine 6-dioxygenase (344 aa).

Positions 193–293 constitute a Fe2OG dioxygenase domain; the sequence is QIQMMLTNYY…RVSIATLIGP (101 aa). Fe cation is bound by residues His-217, Asp-219, and His-274. Residue Arg-284 coordinates 2-oxoglutarate.

The protein belongs to the iron/ascorbate-dependent oxidoreductase family. In terms of assembly, monomer. Fe(2+) is required as a cofactor. L-ascorbate serves as cofactor. The N-terminus is blocked. As to expression, root.

It carries out the reaction L-hyoscyamine + 2-oxoglutarate + O2 = (6S)-6-hydroxyhyoscyamine + succinate + CO2. It functions in the pathway alkaloid biosynthesis; scopolamine biosynthesis. This is Hyoscyamine 6-dioxygenase (H6H) from Hyoscyamus niger (Black henbane).